The following is a 63-amino-acid chain: Large ribosomal subunit protein bL32 (63 aa).

The disordered stretch occupies residues 1–27 (MANPKAKMSKSRRDKRRAQFNARTKPA). Residues 7–18 (KMSKSRRDKRRA) are compositionally biased toward basic residues.

The protein belongs to the bacterial ribosomal protein bL32 family.

The polypeptide is Large ribosomal subunit protein bL32 (Pelodictyon phaeoclathratiforme (strain DSM 5477 / BU-1)).